The primary structure comprises 77 residues: Conodipine-M alpha chain (77 aa).

At Q1 the chain carries Pyrrolidone carboxylic acid. The active site involves H36.

Heterodimer of an alpha and a beta chains; probably disulfide-linked. Ca(2+) serves as cofactor. Expressed by the venom duct.

The protein localises to the secreted. The enzyme catalyses a 1,2-diacyl-sn-glycero-3-phosphocholine + H2O = a 1-acyl-sn-glycero-3-phosphocholine + a fatty acid + H(+). Its activity is regulated as follows. Inhibited by linoleoyl amide and MG14. Its function is as follows. Heterodimer: conodipine-M catalyzes the calcium-dependent hydrolysis of the 2-acyl groups in 3-sn-phosphoglycerides. This activity may be supported by the alpha chain. Conodipine-M inhibits the binding of isradipine (a ligand specific for L-type calcium channel) to L-type calcium channels. This is Conodipine-M alpha chain from Conus magus (Magical cone).